A 92-amino-acid chain; its full sequence is Co-chaperonin GroES (92 aa).

The protein belongs to the GroES chaperonin family. As to quaternary structure, heptamer of 7 subunits arranged in a ring. Interacts with the chaperonin GroEL.

The protein resides in the cytoplasm. Together with the chaperonin GroEL, plays an essential role in assisting protein folding. The GroEL-GroES system forms a nano-cage that allows encapsulation of the non-native substrate proteins and provides a physical environment optimized to promote and accelerate protein folding. GroES binds to the apical surface of the GroEL ring, thereby capping the opening of the GroEL channel. The sequence is that of Co-chaperonin GroES from Methanosarcina barkeri (strain Fusaro / DSM 804).